Consider the following 2115-residue polypeptide: Non-reducing polyketide synthase PFUR17_0229 (2115 aa).

Residues 8-246 form an N-terminal acylcarrier protein transacylase (SAT) domain (SAT) region; it reads VLFGDQTVDP…ISLPITAAFH (239 aa). The Ketosynthase family 3 (KS3) domain maps to 367-796; it reads SGDIAIVGVA…GGNTSLVLED (430 aa). Active-site for beta-ketoacyl synthase activity residues include Cys539, His674, and His713. The tract at residues 895-1218 is malonyl-CoA:ACP transacylase (MAT) domain; it reads IFAFTGQGAQ…SISNAYNSGA (324 aa). The segment at 1279-1592 is product template (PT) domain; sequence TTCLQKVESE…KRNILQSLLS (314 aa). The segment at 1282–1413 is N-terminal hotdog fold; it reads LQKVESETFT…CTVMYGDGQQ (132 aa). Positions 1282-1588 constitute a PKS/mFAS DH domain; it reads LQKVESETFT…FQKMKRNILQ (307 aa). The active-site Proton acceptor; for dehydratase activity is His1315. The interval 1441-1588 is C-terminal hotdog fold; sequence VHRLLKEMIY…FQKMKRNILQ (148 aa). The active-site Proton donor; for dehydratase activity is the Asp1501. Positions 1594 to 1613 are disordered; that stretch reads GHEETPPARPVPSKRTVQGS. The 78-residue stretch at 1626–1703 folds into the Carrier 1 domain; it reads KAASGGFSNI…QLRNFFLDKV (78 aa). At Ser1663 the chain carries O-(pantetheine 4'-phosphoryl)serine. Residues 1710 to 1742 are disordered; that stretch reads FDDEESEMSSSTAGSTPGSSTSHGNQNTTVTTP. Residues 1718-1733 are compositionally biased toward low complexity; that stretch reads SSSTAGSTPGSSTSHG. Residues 1742-1819 form the Carrier 2 domain; it reads PAEPDVVAIL…DVQKALGVPS (78 aa). Ser1779 carries the post-translational modification O-(pantetheine 4'-phosphoryl)serine. Residues 1861–2097 are thioesterase (TE) domain; the sequence is LFLLPDGAGS…VVGGNHFSIM (237 aa).

Requires pantetheine 4'-phosphate as cofactor.

The catalysed reaction is 6 malonyl-CoA + 2 acetyl-CoA + 5 H(+) = o-orsellinate depside + 6 CO2 + 8 CoA + H2O. Functionally, non-reducing polyketide synthase; part of a gene cluster that mediates the biosynthesis of a yet unidentified depside/depsidone compound. The first step in the pathway is performed by the PKS PFUR17_0229 that condenses 2 acetyl-CoA starter units with 6 malonyl-CoA units to produce lecanoric acid (LA), also known as orsellinate depside. The biosynthesis occurs via the formation of 2 orsellinate intermediates fused together by the C-terminal thioesterase (TE) domain that finally releases lecanoric acid. In addition to the PKS gene, the PFUR17 gene cluster contains closely linked genes encoding a cytochrome P-450 and a laccase (phenol oxidase), directly upstream and downstream respectively, so it is likely that lecanoric acid is an intermediate in a longer biosynthetic pathway. The polypeptide is Non-reducing polyketide synthase PFUR17_0229 (Pseudevernia furfuracea (Tree moss)).